The sequence spans 166 residues: Putative 4-hydroxy-4-methyl-2-oxoglutarate aldolase 2 (166 aa).

Ala-2 is modified (N-acetylalanine). Residues Gly-81–Pro-84 and Arg-103 each bind substrate. Position 104 (Asp-104) interacts with a divalent metal cation.

Belongs to the class II aldolase/RraA-like family. In terms of assembly, homotrimer. Requires a divalent metal cation as cofactor.

It catalyses the reaction 4-hydroxy-4-methyl-2-oxoglutarate = 2 pyruvate. The catalysed reaction is oxaloacetate + H(+) = pyruvate + CO2. Catalyzes the aldol cleavage of 4-hydroxy-4-methyl-2-oxoglutarate (HMG) into 2 molecules of pyruvate. Also contains a secondary oxaloacetate (OAA) decarboxylase activity due to the common pyruvate enolate transition state formed following C-C bond cleavage in the retro-aldol and decarboxylation reactions. This Arabidopsis thaliana (Mouse-ear cress) protein is Putative 4-hydroxy-4-methyl-2-oxoglutarate aldolase 2.